A 466-amino-acid chain; its full sequence is Methylenetetrahydrofolate--tRNA-(uracil-5-)-methyltransferase TrmFO (466 aa).

12–17 contributes to the FAD binding site; it reads GAGLAG.

This sequence belongs to the MnmG family. TrmFO subfamily. The cofactor is FAD.

The protein resides in the cytoplasm. The enzyme catalyses uridine(54) in tRNA + (6R)-5,10-methylene-5,6,7,8-tetrahydrofolate + NADH + H(+) = 5-methyluridine(54) in tRNA + (6S)-5,6,7,8-tetrahydrofolate + NAD(+). It catalyses the reaction uridine(54) in tRNA + (6R)-5,10-methylene-5,6,7,8-tetrahydrofolate + NADPH + H(+) = 5-methyluridine(54) in tRNA + (6S)-5,6,7,8-tetrahydrofolate + NADP(+). Functionally, catalyzes the folate-dependent formation of 5-methyl-uridine at position 54 (M-5-U54) in all tRNAs. This chain is Methylenetetrahydrofolate--tRNA-(uracil-5-)-methyltransferase TrmFO, found in Synechococcus elongatus (strain ATCC 33912 / PCC 7942 / FACHB-805) (Anacystis nidulans R2).